Reading from the N-terminus, the 241-residue chain is Small ribosomal subunit protein uS3 (241 aa).

A KH type-2 domain is found at 39 to 108 (IREGVLKLLK…NLKVEVKVIE (70 aa)). The disordered stretch occupies residues 215–241 (SQRVSEKAPMNNDRRFNNKNNNRGGRK). The segment covering 232–241 (NKNNNRGGRK) has biased composition (low complexity).

Belongs to the universal ribosomal protein uS3 family. In terms of assembly, part of the 30S ribosomal subunit. Forms a tight complex with proteins S10 and S14.

Its function is as follows. Binds the lower part of the 30S subunit head. Binds mRNA in the 70S ribosome, positioning it for translation. This is Small ribosomal subunit protein uS3 from Mesoplasma florum (Acholeplasma florum).